The sequence spans 234 residues: 2-phospho-L-lactate guanylyltransferase (234 aa).

The protein belongs to the CofC family. As to quaternary structure, homodimer.

It catalyses the reaction (2S)-2-phospholactate + GTP + H(+) = (2S)-lactyl-2-diphospho-5'-guanosine + diphosphate. It participates in cofactor biosynthesis; coenzyme F420 biosynthesis. Functionally, guanylyltransferase that catalyzes the activation of (2S)-2-phospholactate (2-PL) as (2S)-lactyl-2-diphospho-5'-guanosine, via the condensation of 2-PL with GTP. It is involved in the biosynthesis of coenzyme F420, a hydride carrier cofactor. This chain is 2-phospho-L-lactate guanylyltransferase, found in Methanobrevibacter ruminantium (strain ATCC 35063 / DSM 1093 / JCM 13430 / OCM 146 / M1) (Methanobacterium ruminantium).